Reading from the N-terminus, the 766-residue chain is Nucleolar complex protein 2 (766 aa).

Residues 1–12 (MKLATKKIKTLG) are compositionally biased toward basic residues. Disordered stretches follow at residues 1–73 (MKLA…EELE), 100–154 (DTDD…DEED), and 674–766 (KTGV…LNEW). A compositionally biased stretch (basic and acidic residues) spans 14 to 29 (SKPDLSKKKPAKDAIR). Residues 33 to 42 (PQTTSETKVT) are compositionally biased toward polar residues. Residues 58–67 (KTTKKGFKKS) are compositionally biased toward basic residues. Positions 100 to 115 (DTDDDDDEEGDEEDKE) are enriched in acidic residues. Thr101 is modified (phosphothreonine). The span at 130–140 (EKYHKPSKDLE) shows a compositional bias: basic and acidic residues. Acidic residues predominate over residues 141–154 (VASDESDFEVDEED). Residues Ser143, Ser146, Ser691, Ser693, and Ser705 each carry the phosphoserine modification. Over residues 706–720 (DDDDDEDVQEEEEVE) the composition is skewed to acidic residues. The segment covering 757-766 (IVKDLDLNEW) has biased composition (basic and acidic residues).

Belongs to the NOC2 family.

The protein resides in the nucleus. In Drosophila melanogaster (Fruit fly), this protein is Nucleolar complex protein 2.